Consider the following 248-residue polypeptide: Anamorsin homolog (248 aa).

Residues 4 to 129 (FKGLQKSLYI…ETGSSARLSF (126 aa)) form an N-terminal SAM-like domain region. Residues 130 to 161 (AKKNASAINVWKISGDDEELIDEEELLDEEDK) form a linker region. Residues cysteine 172, cysteine 181, cysteine 184, and cysteine 186 each contribute to the [2Fe-2S] cluster site. Residues 172-186 (CSTTGKRKACKNCSC) are fe-S binding site A. The [4Fe-4S] cluster site is built by cysteine 209, cysteine 212, cysteine 220, and cysteine 223. Short sequence motifs (cx2C motif) lie at residues 209-212 (CGNC) and 220-223 (CSTC). The segment at 209-223 (CGNCYLGDAFRCSTC) is fe-S binding site B.

The protein belongs to the anamorsin family. Monomer. [2Fe-2S] cluster serves as cofactor. The cofactor is [4Fe-4S] cluster.

Its subcellular location is the cytoplasm. The protein resides in the mitochondrion intermembrane space. In terms of biological role, component of the cytosolic iron-sulfur (Fe-S) protein assembly (CIA) machinery. Required for the maturation of extramitochondrial Fe-S proteins. Part of an electron transfer chain functioning in an early step of cytosolic Fe-S biogenesis, facilitating the de novo assembly of a [4Fe-4S] cluster on the cytosolic Fe-S scaffold complex. Electrons are transferred from NADPH via a FAD- and FMN-containing diflavin oxidoreductase. Together with the diflavin oxidoreductase, also required for the assembly of the diferric tyrosyl radical cofactor of ribonucleotide reductase (RNR), probably by providing electrons for reduction during radical cofactor maturation in the catalytic small subunit. This chain is Anamorsin homolog, found in Drosophila erecta (Fruit fly).